The sequence spans 692 residues: Translation initiation factor IF-2 (692 aa).

Residues 194–363 (PRPPIVTVMG…LLVAEMEDLK (170 aa)) enclose the tr-type G domain. Residues 203 to 210 (GHVDHGKT) are G1. 203 to 210 (GHVDHGKT) contributes to the GTP binding site. A G2 region spans residues 228-232 (GITQH). Positions 249–252 (DTPG) are G3. Residues 249–253 (DTPGH) and 303–306 (NKID) contribute to the GTP site. Residues 303 to 306 (NKID) are G4. A G5 region spans residues 339 to 341 (SAK).

The protein belongs to the TRAFAC class translation factor GTPase superfamily. Classic translation factor GTPase family. IF-2 subfamily.

It is found in the cytoplasm. In terms of biological role, one of the essential components for the initiation of protein synthesis. Protects formylmethionyl-tRNA from spontaneous hydrolysis and promotes its binding to the 30S ribosomal subunits. Also involved in the hydrolysis of GTP during the formation of the 70S ribosomal complex. This Thermoanaerobacter sp. (strain X514) protein is Translation initiation factor IF-2.